We begin with the raw amino-acid sequence, 501 residues long: GMP synthase [glutamine-hydrolyzing] (501 aa).

One can recognise a Glutamine amidotransferase type-1 domain in the interval 1–185 (MVLVVDYGSQ…LFNVCKLEKN (185 aa)). Cysteine 75 acts as the Nucleophile in catalysis. Catalysis depends on residues histidine 159 and glutamate 161. The GMPS ATP-PPase domain maps to 186-376 (WKIGDLVEEK…LGIPDRIINR (191 aa)). 213–219 (SGGVDSS) lines the ATP pocket.

In terms of assembly, homodimer.

The catalysed reaction is XMP + L-glutamine + ATP + H2O = GMP + L-glutamate + AMP + diphosphate + 2 H(+). It participates in purine metabolism; GMP biosynthesis; GMP from XMP (L-Gln route): step 1/1. In terms of biological role, catalyzes the synthesis of GMP from XMP. This chain is GMP synthase [glutamine-hydrolyzing], found in Thermotoga petrophila (strain ATCC BAA-488 / DSM 13995 / JCM 10881 / RKU-1).